A 481-amino-acid polypeptide reads, in one-letter code: Aspartyl/glutamyl-tRNA(Asn/Gln) amidotransferase subunit B (481 aa).

It belongs to the GatB/GatE family. GatB subfamily. In terms of assembly, heterotrimer of A, B and C subunits.

It catalyses the reaction L-glutamyl-tRNA(Gln) + L-glutamine + ATP + H2O = L-glutaminyl-tRNA(Gln) + L-glutamate + ADP + phosphate + H(+). The enzyme catalyses L-aspartyl-tRNA(Asn) + L-glutamine + ATP + H2O = L-asparaginyl-tRNA(Asn) + L-glutamate + ADP + phosphate + 2 H(+). Functionally, allows the formation of correctly charged Asn-tRNA(Asn) or Gln-tRNA(Gln) through the transamidation of misacylated Asp-tRNA(Asn) or Glu-tRNA(Gln) in organisms which lack either or both of asparaginyl-tRNA or glutaminyl-tRNA synthetases. The reaction takes place in the presence of glutamine and ATP through an activated phospho-Asp-tRNA(Asn) or phospho-Glu-tRNA(Gln). This is Aspartyl/glutamyl-tRNA(Asn/Gln) amidotransferase subunit B from Ectopseudomonas mendocina (strain ymp) (Pseudomonas mendocina).